A 361-amino-acid chain; its full sequence is Putative agmatine deiminase (361 aa).

Residue cysteine 354 is the Amidino-cysteine intermediate of the active site.

Belongs to the agmatine deiminase family.

It catalyses the reaction agmatine + H2O = N-carbamoylputrescine + NH4(+). The sequence is that of Putative agmatine deiminase from Streptococcus pneumoniae (strain ATCC BAA-255 / R6).